The chain runs to 260 residues: tRNA pseudouridine synthase A (260 aa).

The active-site Nucleophile is Asp-51. Tyr-109 lines the substrate pocket.

It belongs to the tRNA pseudouridine synthase TruA family. As to quaternary structure, homodimer.

It catalyses the reaction uridine(38/39/40) in tRNA = pseudouridine(38/39/40) in tRNA. In terms of biological role, formation of pseudouridine at positions 38, 39 and 40 in the anticodon stem and loop of transfer RNAs. The polypeptide is tRNA pseudouridine synthase A (Methylibium petroleiphilum (strain ATCC BAA-1232 / LMG 22953 / PM1)).